Consider the following 251-residue polypeptide: Electron transfer flavoprotein subunit beta, mitochondrial (251 aa).

Belongs to the ETF beta-subunit/FixA family. In terms of assembly, heterodimer of an alpha and a beta subunit. Requires FAD as cofactor. AMP is required as a cofactor.

It localises to the mitochondrion matrix. Functionally, the electron transfer flavoprotein serves as a specific electron acceptor for several dehydrogenases, including five acyl-CoA dehydrogenases, glutaryl-CoA and sarcosine dehydrogenase. It transfers the electrons to the main mitochondrial respiratory chain via ETF-ubiquinone oxidoreductase (ETF dehydrogenase). Involved in leucine catabolism and in phytol degradation. This chain is Electron transfer flavoprotein subunit beta, mitochondrial (ETFB), found in Arabidopsis thaliana (Mouse-ear cress).